We begin with the raw amino-acid sequence, 427 residues long: Diaminobutyrate--2-oxoglutarate transaminase (427 aa).

Residue lysine 269 is modified to N6-(pyridoxal phosphate)lysine.

It belongs to the class-III pyridoxal-phosphate-dependent aminotransferase family. It depends on pyridoxal 5'-phosphate as a cofactor.

The enzyme catalyses L-2,4-diaminobutanoate + 2-oxoglutarate = L-aspartate 4-semialdehyde + L-glutamate. Its pathway is amine and polyamine biosynthesis; ectoine biosynthesis; L-ectoine from L-aspartate 4-semialdehyde: step 1/3. Functionally, catalyzes reversively the conversion of L-aspartate beta-semialdehyde (ASA) to L-2,4-diaminobutyrate (DABA) by transamination with L-glutamate. The sequence is that of Diaminobutyrate--2-oxoglutarate transaminase (ectB) from Halalkalibacterium halodurans (strain ATCC BAA-125 / DSM 18197 / FERM 7344 / JCM 9153 / C-125) (Bacillus halodurans).